The chain runs to 383 residues: S-adenosylmethionine synthase (383 aa).

H16 is a binding site for ATP. Position 18 (D18) interacts with Mg(2+). E44 contacts K(+). 2 residues coordinate L-methionine: E57 and Q98. A flexible loop region spans residues 98 to 108; the sequence is QSPDIAMGVDI. ATP is bound by residues 158-160, 226-227, D235, 241-242, A258, and K262; these read DQK, RF, and RK. Position 235 (D235) interacts with L-methionine. L-methionine is bound at residue K266.

This sequence belongs to the AdoMet synthase family. As to quaternary structure, homotetramer; dimer of dimers. It depends on Mg(2+) as a cofactor. Requires K(+) as cofactor.

It is found in the cytoplasm. The enzyme catalyses L-methionine + ATP + H2O = S-adenosyl-L-methionine + phosphate + diphosphate. Its pathway is amino-acid biosynthesis; S-adenosyl-L-methionine biosynthesis; S-adenosyl-L-methionine from L-methionine: step 1/1. Catalyzes the formation of S-adenosylmethionine (AdoMet) from methionine and ATP. The overall synthetic reaction is composed of two sequential steps, AdoMet formation and the subsequent tripolyphosphate hydrolysis which occurs prior to release of AdoMet from the enzyme. The sequence is that of S-adenosylmethionine synthase from Fusobacterium nucleatum subsp. nucleatum (strain ATCC 25586 / DSM 15643 / BCRC 10681 / CIP 101130 / JCM 8532 / KCTC 2640 / LMG 13131 / VPI 4355).